Reading from the N-terminus, the 273-residue chain is Aquaporin NIP1-4 (273 aa).

The next 2 membrane-spanning stretches (helical) occupy residues 59–79 and 86–106; these read LLAE…AITV and VTFP…VYAV. The NPA 1 motif lies at 115–117; that stretch reads NPA. Transmembrane regions (helical) follow at residues 133–155, 174–194, and 198–218; these read APAY…RLMF, SLVI…AVAT, and AVGH…VLFA. The NPA 2 motif lies at 227-229; sequence NPA. A helical membrane pass occupies residues 245–265; that stretch reads WVYILGPFAGAAAGAWAYSLI.

This sequence belongs to the MIP/aquaporin (TC 1.A.8) family. NIP (TC 1.A.8.12) subfamily. As to expression, expressed in leaves.

It is found in the membrane. In terms of biological role, aquaporins facilitate the transport of water and small neutral solutes across cell membranes. This chain is Aquaporin NIP1-4 (NIP1-4), found in Oryza sativa subsp. japonica (Rice).